Consider the following 240-residue polypeptide: uncharacterized protein (240 aa).

The interval 26 to 52 is disordered; sequence DYVDDGESLPTRQSVKNQREQKKKQGK. The chain crosses the membrane as a helical span at residues 57-77; the sequence is LFTVLAVIFVFVPVIVLVTLF. Residues 100–185 are disordered; that stretch reads KYEVVPKSED…QPAEPVQNVP (86 aa). Residues 103 to 159 show a composition bias toward basic and acidic residues; it reads VVPKSEDKNDTADTKETALQKESKKEPEDSKPKEQTAADKKQTAVAEKEDSPNKEEA. Low complexity predominate over residues 160–185; that stretch reads TAAAASSSQSTVQQQEQPAEPVQNVP. Residues 189 to 235 enclose the LysM domain; the sequence is VKHTVQKKETLYRISMKYYKSRTGEEKIRAYNHLNGNDVYTGQVLDI.

It localises to the membrane. This is an uncharacterized protein from Bacillus subtilis (strain 168).